The primary structure comprises 144 residues: MNFKYIVAVSFLIASAYARSEENEIQSLSQRDVLEEESLREIRGIGTKILGGVKTALKGALKELASTYVNGKRTAEEHEVMKRLETVMRDLDSLDYPEEASERETRGFNQEEIANLFTKKEKRILGPVLGLVSNALGGLLKNIG.

A signal peptide spans 1–18 (MNFKYIVAVSFLIASAYA). Positions 19–43 (RSEENEIQSLSQRDVLEEESLREIR) are excised as a propeptide. Residue Asn-70 is modified to Asparagine amide. Positions 74-123 (TAEEHEVMKRLETVMRDLDSLDYPEEASERETRGFNQEEIANLFTKKEKR) are excised as a propeptide. An Isoleucine amide modification is found at Ile-143.

This sequence belongs to the bombinin family. Expressed by the skin glands.

The protein localises to the secreted. Maximin-2 shows antibacterial activity against both Gram-positive and Gram-negative bacteria. It also shows antimicrobial activity against the fungus C.albicans, but not against A.flavus nor P.uticale. It has little hemolytic activity. In terms of biological role, maximin-H8 shows antimicrobial activity against bacteria and against the fungus C.albicans. Shows strong hemolytic activity. The protein is Maximins 2/H8 type 2 of Bombina maxima (Giant fire-bellied toad).